Consider the following 427-residue polypeptide: MLGVALLSGAVHAAVQPLDRVVAIVDNDVVMQSQLDQRVHEVQQTIAKRGGGVPPTSALEQQVLERLIVENLQLQIGERSGIRITDEELNQAIGTIAQRNGMSLDQFRAALARDGLSFDDAREQVKREMIISRVRQRRVAERIQVSEQEVKNFLASDLGKMQMSEEYRLANILIPTPEAANSDDIQKAARKVGDVYQQLRQGADFGQMAIANSASENALEGGEMGWRKAGQLPPDFAKMLSSMPVGEITQPIRIPNGFIILKLEEKRGGSENVLRDEVHVRHILIKPSEIRSEAATEQLAERLYDRIKNGEDFGELAKSFSEDPGSALNGGDLNWVDPNSLVPEFREQMANAQQGVVTKPFKTQYGWHVLEVLGRRATDSTEQAREQQALSVLRNRKYDEELQTWLRQIRDEAYVEIKLPGADQAAQ.

Residues 1–13 (MLGVALLSGAVHA) form the signal peptide. PpiC domains are found at residues 164-265 (SEEY…KLEE) and 275-374 (RDEV…EVLG).

It is found in the periplasm. The catalysed reaction is [protein]-peptidylproline (omega=180) = [protein]-peptidylproline (omega=0). Chaperone involved in the correct folding and assembly of outer membrane proteins. Recognizes specific patterns of aromatic residues and the orientation of their side chains, which are found more frequently in integral outer membrane proteins. May act in both early periplasmic and late outer membrane-associated steps of protein maturation. In Pseudomonas putida (strain ATCC 47054 / DSM 6125 / CFBP 8728 / NCIMB 11950 / KT2440), this protein is Chaperone SurA.